The following is a 448-amino-acid chain: GA-binding protein subunit beta-2 (448 aa).

ANK repeat units follow at residues 5-34, 37-66, 70-99, 103-132, and 136-166; these read DLGK…PFTT, LGTS…SRDA, VDRT…DVNA, LKMT…DVHA, and FDKS…QVNV. Residue S256 is modified to Phosphoserine. Disordered regions lie at residues 325–354 and 420–448; these read EEEE…GNER and ELEE…TVSS. Residues 337–354 are compositionally biased toward basic and acidic residues; that stretch reads RIGEKTNSVEESKEGNER. Positions 345 to 395 form a coiled coil; it reads VEESKEGNERELLQQQLQEANRRAQEYRHQLLKKEQEAEQYRLKLEAIARQ. Polar residues predominate over residues 428 to 448; that stretch reads VTGSAGTTEPHTRVSMATVSS.

In terms of assembly, heterotetramer of two alpha and two beta subunits. The C-terminal is necessary for the formation of a heterotetrameric GABP-alpha-2/beta-2 complex, and also facilitates homotypic dimerization. Interacts with ADGRB2.

Its subcellular location is the nucleus. May function as transcription factor capable of interacting with purine rich repeats (GA repeats). This is GA-binding protein subunit beta-2 (GABPB2) from Homo sapiens (Human).